The sequence spans 59 residues: UPF0434 protein VIBHAR_01537 (59 aa).

The protein belongs to the UPF0434 family.

The polypeptide is UPF0434 protein VIBHAR_01537 (Vibrio campbellii (strain ATCC BAA-1116)).